We begin with the raw amino-acid sequence, 288 residues long: Cyclin-dependent kinase 2 homolog (288 aa).

In terms of domain architecture, Protein kinase spans 4-284 (YHGLEKIGEG…AKEALQHAYF (281 aa)). ATP is bound by residues 10–18 (IGEGTYGVV) and Lys32. Phosphothreonine is present on Thr14. A Phosphotyrosine modification is found at Tyr15. Residue Asp125 is the Proton acceptor of the active site. Thr158 carries the phosphothreonine modification.

Belongs to the protein kinase superfamily. CMGC Ser/Thr protein kinase family. CDC2/CDKX subfamily. As to quaternary structure, may form a complex composed of at least the catalytic subunit CRK2 and a cyclin. Mg(2+) is required as a cofactor.

The protein localises to the cytoplasm. The enzyme catalyses L-seryl-[protein] + ATP = O-phospho-L-seryl-[protein] + ADP + H(+). It carries out the reaction L-threonyl-[protein] + ATP = O-phospho-L-threonyl-[protein] + ADP + H(+). The catalysed reaction is [DNA-directed RNA polymerase] + ATP = phospho-[DNA-directed RNA polymerase] + ADP + H(+). Phosphorylation at Thr-14 or Tyr-15 inactivates the enzyme, while phosphorylation at Thr-158 activates it. Its function is as follows. Serine/threonine-protein kinase. Involved in the control of the cell cycle. Required for entry into S-phase and mitosis. Probable component of the kinase complex that phosphorylates the repetitive C-terminus of RNA polymerase II. The polypeptide is Cyclin-dependent kinase 2 homolog (Plasmodium knowlesi (strain H)).